A 936-amino-acid chain; its full sequence is Protocadherin gamma-A10 (936 aa).

A signal peptide spans 1–32 (MAAQRNRSKESKDCSGLVLLCLFFGIPWEAGA). Cadherin domains follow at residues 33–137 (RQIS…APKF), 138–246 (QAEN…APVF), 247–351 (TLPE…SPEL), 352–456 (TITS…PPTF), 457–566 (SQVS…APEI), and 574–687 (DGST…SPAN). The Extracellular segment spans residues 33–696 (RQISYSIPEE…NSETSDLTLY (664 aa)). A glycan (N-linked (GlcNAc...) asparagine) is linked at Asn51. Asn423 and Asn549 each carry an N-linked (GlcNAc...) asparagine glycan. A helical membrane pass occupies residues 697 to 717 (LVVAVAAVSCVFLAFVIVLLA). Residues 718-936 (HRLRRWHKSR…KKKSGKKEKK (219 aa)) are Cytoplasmic-facing. Disordered stretches follow at residues 806 to 845 (EDTP…WPNN) and 906 to 936 (ATLT…KEKK). Polar residues predominate over residues 820 to 845 (WRFSQAQRPGTSGSQNGDDTGTWPNN). The span at 926–936 (NKKKSGKKEKK) shows a compositional bias: basic residues.

The protein localises to the cell membrane. Its function is as follows. Potential calcium-dependent cell-adhesion protein. May be involved in the establishment and maintenance of specific neuronal connections in the brain. The polypeptide is Protocadherin gamma-A10 (PCDHGA10) (Homo sapiens (Human)).